A 764-amino-acid polypeptide reads, in one-letter code: Zinc finger CCCH domain-containing protein 24 (764 aa).

ANK repeat units follow at residues 108-138 and 143-175; these read EHRTPLMVAATYGSLAVLRLLLSLPSVDVNR and DGTTALHCAASGGSPSCVEAVKLLLAAGADADA. The segment at 321–348 adopts a C3H1-type zinc-finger fold; that stretch reads HYSCVPCPDFRKGVCRRGDMCEYAHGVF. Disordered regions lie at residues 616 to 665 and 698 to 732; these read QREK…DWGV and KESPPEKQVTTAESINSVGPSPLMPPSVSNGEGPS. The segment covering 640 to 659 has biased composition (low complexity); it reads SGVVGSPLSSSWSKWGSPSG. Residues 705 to 716 are compositionally biased toward polar residues; it reads QVTTAESINSVG.

The polypeptide is Zinc finger CCCH domain-containing protein 24 (Oryza sativa subsp. japonica (Rice)).